Here is a 251-residue protein sequence, read N- to C-terminus: YlmG homolog protein 2, chloroplastic (251 aa).

The N-terminal 51 residues, 1-51 (MEASANEPAMKSLKSNPSGPIPNFFVSLSSAFTQTPLVRSNKPNLLLLPPV), are a transit peptide targeting the chloroplast. 2 helical membrane-spanning segments follow: residues 119-139 (GFAA…NGLI) and 183-203 (FIPP…VLNA). A compositionally biased stretch (basic residues) spans 232 to 243 (VRRRRLSSHKDH). Residues 232–251 (VRRRRLSSHKDHRPSSASMT) form a disordered region.

The protein belongs to the YggT family.

It localises to the plastid. The protein localises to the chloroplast thylakoid membrane. Not required for the biogenesis and accumulation of native cytochrome b6 in the thylakoid membrane. Not functionally involved in the pathway for covalent binding of the c-type heme to cytochrome b6. The chain is YlmG homolog protein 2, chloroplastic from Arabidopsis thaliana (Mouse-ear cress).